The primary structure comprises 806 residues: ATP-dependent zinc metalloprotease FTSH 11, chloroplastic/mitochondrial (806 aa).

Residues 1–63 constitute a chloroplast and mitochondrion transit peptide; it reads MSSSTLQASL…RFRPLPCSLR (63 aa). Residues 106-116 are compositionally biased toward basic and acidic residues; sequence FVGGEETKSGG. Residues 106 to 130 form a disordered region; that stretch reads FVGGEETKSGGEEAEVSNGVTEGKE. Residues 301 to 321 traverse the membrane as a helical segment; the sequence is LVSTILFTVAVGLVWIMGAAA. 402–409 provides a ligand contact to ATP; sequence GAPGTGKT. Histidine 620 is a Zn(2+) binding site. Glutamate 621 is an active-site residue. Zn(2+) is bound by residues histidine 624 and aspartate 698.

The protein in the N-terminal section; belongs to the AAA ATPase family. This sequence in the C-terminal section; belongs to the peptidase M41 family. In terms of assembly, homooligomer. Requires Zn(2+) as cofactor.

It is found in the mitochondrion inner membrane. The protein localises to the plastid. Its subcellular location is the chloroplast thylakoid membrane. Probable ATP-dependent zinc metallopeptidase. Involved in the assembly and/or stability of the complexes I and V. Involved in thermotolerance but not in high light stress resistance or in the assembly/stability of the complexes I and V of the mitochondrial oxidative phosphorylation system. The chain is ATP-dependent zinc metalloprotease FTSH 11, chloroplastic/mitochondrial (FTSH11) from Arabidopsis thaliana (Mouse-ear cress).